We begin with the raw amino-acid sequence, 530 residues long: UPF0422 protein lpp3030 (530 aa).

The first 19 residues, 1 to 19 (MKFKKIILALACLSSPLYA), serve as a signal peptide directing secretion. The stretch at 20–66 (DQDQQLKSEIQRLQHQAEDLQAQLNRLQKQLANHKSSQQKHEQQAAA) forms a coiled coil. The interval 50-81 (LANHKSSQQKHEQQAAAKPAEPKSKPTTKSGA) is disordered. Positions 63 to 79 (QAAAKPAEPKSKPTTKS) are enriched in low complexity.

The protein belongs to the UPF0422 family.

The polypeptide is UPF0422 protein lpp3030 (Legionella pneumophila (strain Paris)).